Consider the following 144-residue polypeptide: Large ribosomal subunit protein uL15 (144 aa).

Residues 1–53 (MRLNTLSPADGSKHAPKRLGRGIGSGLGKTGGRGHKGQNSRSGGGVRRGFEGG) form a disordered region. Positions 21 to 31 (RGIGSGLGKTG) are enriched in gly residues.

Belongs to the universal ribosomal protein uL15 family. Part of the 50S ribosomal subunit.

Binds to the 23S rRNA. The protein is Large ribosomal subunit protein uL15 of Erwinia tasmaniensis (strain DSM 17950 / CFBP 7177 / CIP 109463 / NCPPB 4357 / Et1/99).